We begin with the raw amino-acid sequence, 164 residues long: Ribosome maturation factor RimM (164 aa).

The PRC barrel domain maps to 90-161 (KGSYFIADLI…TVTIKPLEIW (72 aa)).

Belongs to the RimM family. As to quaternary structure, binds ribosomal protein uS19.

Its subcellular location is the cytoplasm. An accessory protein needed during the final step in the assembly of 30S ribosomal subunit, possibly for assembly of the head region. Essential for efficient processing of 16S rRNA. May be needed both before and after RbfA during the maturation of 16S rRNA. It has affinity for free ribosomal 30S subunits but not for 70S ribosomes. This is Ribosome maturation factor RimM from Clostridium botulinum (strain ATCC 19397 / Type A).